The chain runs to 302 residues: Sulfate adenylyltransferase subunit 2 (302 aa).

Belongs to the PAPS reductase family. CysD subfamily. Heterodimer composed of CysD, the smaller subunit, and CysN.

It carries out the reaction sulfate + ATP + H(+) = adenosine 5'-phosphosulfate + diphosphate. It functions in the pathway sulfur metabolism; hydrogen sulfide biosynthesis; sulfite from sulfate: step 1/3. With CysN forms the ATP sulfurylase (ATPS) that catalyzes the adenylation of sulfate producing adenosine 5'-phosphosulfate (APS) and diphosphate, the first enzymatic step in sulfur assimilation pathway. APS synthesis involves the formation of a high-energy phosphoric-sulfuric acid anhydride bond driven by GTP hydrolysis by CysN coupled to ATP hydrolysis by CysD. The protein is Sulfate adenylyltransferase subunit 2 of Escherichia coli O81 (strain ED1a).